Reading from the N-terminus, the 37-residue chain is Large ribosomal subunit protein bL36 (37 aa).

The protein belongs to the bacterial ribosomal protein bL36 family.

The polypeptide is Large ribosomal subunit protein bL36 (Staphylococcus epidermidis (strain ATCC 35984 / DSM 28319 / BCRC 17069 / CCUG 31568 / BM 3577 / RP62A)).